A 734-amino-acid polypeptide reads, in one-letter code: Regulator of G-protein signaling rgs-6 (734 aa).

A disordered region spans residues Met-1–Asn-24. Low complexity predominate over residues Asn-8 to Asn-24. Residues Ile-46–Ser-157 form the RGS domain. Disordered stretches follow at residues Gln-162 to His-236, His-489 to Ala-515, and Val-538 to Val-734. A compositionally biased stretch (acidic residues) spans Thr-166–Asp-176. Over residues His-180–Glu-191 the composition is skewed to polar residues. Low complexity predominate over residues Ala-194–Ala-208. 2 stretches are compositionally biased toward polar residues: residues Ser-494–Arg-506 and Val-538–Arg-557. Basic and acidic residues-rich tracts occupy residues Ser-563 to Asp-585 and Thr-606 to Asp-619. Residues Ala-642 to Thr-694 show a composition bias toward low complexity. Polar residues-rich tracts occupy residues Ser-705–Leu-715 and Arg-724–Val-734.

This chain is Regulator of G-protein signaling rgs-6, found in Caenorhabditis elegans.